The chain runs to 130 residues: Secreted RxLR effector protein 68 (130 aa).

Residues 1-29 form the signal peptide; sequence MRCVCASIRRTRIIEFLMFFALSSSTASC. N-linked (GlcNAc...) asparagine glycosylation occurs at Asn-36. Positions 45–48 match the RxLR motif; it reads RWLR.

Belongs to the RxLR effector family.

It is found in the secreted. It localises to the host cytoplasm. The protein resides in the host nucleus. Effector that acts as a broad suppressor of cell death to interrupt plant immunity. Inhibits cell death induced by cell death-inducing proteins, including the PAMP elicitor INF1 from P.infestans. The protein is Secreted RxLR effector protein 68 of Plasmopara viticola (Downy mildew of grapevine).